Reading from the N-terminus, the 266-residue chain is MELSHRQGTTTLTRTHPNDKEGQQDMNSFRANHSSLDNSKFKYHARLSQSPLGSSLGQGYLETPPLPPTPTCRTSLAMNSHPEDLKKGASRSSSRDARETFREGCVGEEGQDSRSPEQRTVPLSKKDSVIPENIRHKFGSKMVDQLISEDQARQAIGEMFEGQKRPSSWPSRTQSPMQASSIFSDYYDLGYHMRSNLFQGPPQETKSLMKASYTPEVIEKSVRDVEHWHGRKTDDLGRWHRKNAMNMNLQKALEEKYGEKSRSKAK.

Composition is skewed to polar residues over residues 1-15 and 24-38; these read MELS…LTRT and QDMN…SLDN. A disordered region spans residues 1-124; that stretch reads MELSHRQGTT…SPEQRTVPLS (124 aa). Over residues 47–63 the composition is skewed to low complexity; that stretch reads LSQSPLGSSLGQGYLET. The segment covering 81-102 has biased composition (basic and acidic residues); the sequence is HPEDLKKGASRSSSRDARETFR.

Only detected in testis, in the spermatids and sperm within the seminiferous tubules (at protein level).

The protein localises to the cytoplasmic vesicle. It is found in the secretory vesicle. The protein resides in the acrosome. Its subcellular location is the cell projection. It localises to the cilium. The protein localises to the flagellum. Seems to be associated with spermiogenesis but is not essential for sperm development and male fertility. This chain is Ciliary microtubule inner protein 4 (Cimip4), found in Mus musculus (Mouse).